The sequence spans 563 residues: Group II intron-interrupted relaxase LtrB (563 aa).

Residue tyrosine 44 is part of the active site. Positions 159 and 161 each coordinate Mg(2+).

It belongs to the mobilization (MOB) protein type 1 family. Mg(2+) serves as cofactor. Requires Mn(2+) as cofactor.

Functionally, mediates initiation of conjugal transfer possibly by introducing a single-stranded nick at the potential origin of transfer. In Lactococcus lactis subsp. cremoris (strain MG1363), this protein is Group II intron-interrupted relaxase LtrB (ltrBE1).